The primary structure comprises 91 residues: Small ribosomal subunit protein bS20 (91 aa).

It belongs to the bacterial ribosomal protein bS20 family.

In terms of biological role, binds directly to 16S ribosomal RNA. This is Small ribosomal subunit protein bS20 from Caulobacter sp. (strain K31).